The following is a 418-amino-acid chain: Protein-lysine 6-oxidase (418 aa).

The signal sequence occupies residues 1-20 (MRFAWTALLGSLQLCALVRC). Residues 21–169 (APPAASHRQP…NRVEVDGMVG (149 aa)) constitute a propeptide, removed by BMP1. Residues 63-84 (YQPQRRRDPGATAPGAANATAP) form a disordered region. The span at 72–84 (GATAPGAANATAP) shows a compositional bias: low complexity. Asn-80, Asn-96, and Asn-143 each carry an N-linked (GlcNAc...) asparagine glycan. A disordered region spans residues 130–175 (TSGAHDAGTSRADNQTAPGEVPTLSNLRPPNRVEVDGMVGDDPYNP). Residues 140-157 (RADNQTAPGEVPTLSNLR) show a composition bias toward polar residues. Tyr-188 is subject to Sulfotyrosine. Residues 214–418 (PDLVPDPYYI…YASGCTISPY (205 aa)) are lysyl-oxidase like. Cystine bridges form between Cys-239–Cys-245, Cys-292–Cys-341, Cys-325–Cys-331, Cys-352–Cys-362, and Cys-399–Cys-413. His-293, His-295, and His-297 together coordinate Cu cation. The lysine tyrosylquinone (Lys-Tyr) cross-link spans 321–356 (KASFCLEDTSCDYGYHRRFACTAHTQGLSPGCYDTY). A 2',4',5'-topaquinone modification is found at Tyr-356.

Belongs to the lysyl oxidase family. As to quaternary structure, interacts with MFAP4. Interacts (via propeptide) with EFEMP2; this interaction is strong and facilitates formation of ternary complexes with ELN during elastic fiber assembly; this interaction limits interaction of EFEMP2 with FBLN5. Requires Cu cation as cofactor. Lysine tyrosylquinone residue serves as cofactor. The lysine tyrosylquinone cross-link (LTQ) is generated by condensation of the epsilon-amino group of a lysine with a topaquinone produced by oxidation of tyrosine. Post-translationally, proteolytically cleaved by BMP1 which removes the propeptide. Also proteolytically cleaved by ADAMTS2 and ADAMTS14, but not by ADAMTS3, at an additional cleavage site downstream of the BMP1 cleavage site. The propeptide plays a role in directing the deposition of this enzyme to elastic fibers, via interaction with tropoelastin. Cleavage by BMP1 to remove the propeptide does not increase enzymatic activity but increases binding to collagen. Cleavage by ADAMTS2 produces a form with reduced collagen-binding activity. In terms of processing, sulfated at Tyr-188 and also at either Tyr-184 or Tyr-185 which enhances binding to collagen.

It is found in the secreted. It localises to the extracellular space. The enzyme catalyses L-lysyl-[protein] + O2 + H2O = (S)-2-amino-6-oxohexanoyl-[protein] + H2O2 + NH4(+). Functionally, responsible for the post-translational oxidative deamination of peptidyl lysine residues in precursors to fibrous collagen and elastin. Regulator of Ras expression. May play a role in tumor suppression. Plays a role in the aortic wall architecture. The protein is Protein-lysine 6-oxidase of Bos taurus (Bovine).